A 254-amino-acid polypeptide reads, in one-letter code: RxLR effector protein CRE5 (254 aa).

Positions 1 to 19 are cleaved as a signal peptide; it reads MQTIQLIIFVAFVLSRAAA. N-linked (GlcNAc...) asparagine glycosylation occurs at N49. The short motif at 53-63 is the RxLR-dEER element; it reads RSLRQHEGEDR. The region spanning 191–254 is the Nudix hydrolase domain; sequence SRWLSAGVVT…MEEGGVCRAL (64 aa). A Nudix box motif is present at residues 228–249; sequence GGWDRGEKIKKAALREVMEEGG.

The protein in the N-terminal section; belongs to the RxLR effector family. In the C-terminal section; belongs to the Nudix hydrolase family.

It is found in the secreted. Its subcellular location is the host cytoplasm. The protein resides in the host nucleus. The protein localises to the host nucleolus. In terms of biological role, effector that is involved in host plant infection. Contributes to virulence during the early infection stage, by inhibiting plant defense responses induced by both PAMP-triggered immunity (PTI) and effector-triggered immunity (ETI). The sequence is that of RxLR effector protein CRE5 from Phytophthora infestans (strain T30-4) (Potato late blight agent).